Here is a 129-residue protein sequence, read N- to C-terminus: Small ribosomal subunit protein uS11 (129 aa).

It belongs to the universal ribosomal protein uS11 family. Part of the 30S ribosomal subunit. Interacts with proteins S7 and S18. Binds to IF-3.

Functionally, located on the platform of the 30S subunit, it bridges several disparate RNA helices of the 16S rRNA. Forms part of the Shine-Dalgarno cleft in the 70S ribosome. This chain is Small ribosomal subunit protein uS11, found in Marinobacter nauticus (strain ATCC 700491 / DSM 11845 / VT8) (Marinobacter aquaeolei).